The sequence spans 234 residues: Transmembrane protein 65 (234 aa).

The transit peptide at 1-55 directs the protein to the mitochondrion; sequence MSRLLPLLGSRTARSLRPGPAAAPRLPSWCCCGRGLLALGVPGGPRLLGTHPKKE. Topologically, residues 56-110 are cytoplasmic; sequence PMEALNTAQGARDFIYSLHSTERSCLLKELHRFESIAIAQEKLEALPPTPGQLRY. The helical transmembrane segment at 111 to 131 threads the bilayer; that stretch reads VFFHNAIPFVGFGFLDNAIMI. Over 132–138 the chain is Extracellular; that stretch reads VAGTQIE. Residues 139–159 form a helical membrane-spanning segment; that stretch reads LSIGIILGISTMAAAALGNLV. Topologically, residues 160–203 are cytoplasmic; sequence SDLAGLGLAGYVEALASRLGLSIPDLTPKQVDMWQTRVSTHLGK. Residues 204–224 traverse the membrane as a helical segment; that stretch reads AVGVTIGCILGMFPLIFFGGS. The Extracellular portion of the chain corresponds to 225 to 234; the sequence is EEDEKLETTN.

Monomer. Homodimer. Interacts with GJA1. Interacts weakly with DSP. Interacts with SCN1B. In terms of tissue distribution, predominantly expressed in the ventricular tissue (at protein level).

It localises to the cell membrane. It is found in the mitochondrion inner membrane. Functionally, essential for maintaining proper cardiac intercalated disk (ICD) structure and function as well as cardiac conduction velocity in the heart. Its association with SCN1B is required for stabilizing the perinexus in the ICD and for localization of GJA1 and SCN5A to the ICD. May regulate the function of the gap junction protein GJA1 and may contribute to the stability and proper localization of GJA1 to cardiac intercalated disk thereby regulating gap junction communication. Regulates mitochondrial respiration and mitochondrial DNA copy number maintenance. The protein is Transmembrane protein 65 (Tmem65) of Mus musculus (Mouse).